Here is a 366-residue protein sequence, read N- to C-terminus: 15-cis-zeta-carotene isomerase, chloroplastic (366 aa).

A chloroplast-targeting transit peptide spans 1–45 (MASQLRLHLAATPPLLPHRRPHLARPLCPTLNPIRAPLPPLSRVL). A run of 6 helical transmembrane segments spans residues 94–114 (SWAY…VLWI), 136–156 (EVVM…MASL), 171–191 (VLFA…FINH), 203–223 (GITG…FFLY), 260–280 (VIWC…AASV), and 338–358 (LPYV…PLMQ).

Expressed in leaves and roots, and at lower levels in embryos and endosperm.

It localises to the plastid. Its subcellular location is the chloroplast membrane. The catalysed reaction is 9,9',15-tri-cis-zeta-carotene = 9,9'-di-cis-zeta-carotene. In terms of biological role, isomerase involved in the biosynthesis of carotenoids. Catalyzes the cis- to trans-conversion of the 15-cis-bond in 9,15,9'-tri-cis-zeta-carotene. This is 15-cis-zeta-carotene isomerase, chloroplastic from Zea mays (Maize).